We begin with the raw amino-acid sequence, 498 residues long: Lysine--tRNA ligase (498 aa).

Residues glutamate 407 and glutamate 414 each coordinate Mg(2+).

The protein belongs to the class-II aminoacyl-tRNA synthetase family. As to quaternary structure, homodimer. It depends on Mg(2+) as a cofactor.

It localises to the cytoplasm. The enzyme catalyses tRNA(Lys) + L-lysine + ATP = L-lysyl-tRNA(Lys) + AMP + diphosphate. This Sinorhizobium medicae (strain WSM419) (Ensifer medicae) protein is Lysine--tRNA ligase.